Consider the following 234-residue polypeptide: MAGIISPSPTALYFTSNVGGRRLKAVSWAGKSVSGNVIRRRSLRIAAELKFVNAEEAKQLIAEEGYSVVDVRDKTQFERAHIKSCSHIPLFIYNEDNDIGTIIKRTVHNNFSGLFFGLPFTKVNPEFLKSVRNEFSQDSKLLLVCQEGLRSAAAASRLEEAGYENIACVTSGLQSVKPGTFESVGSTELQNAGKAGLITIQGKISAVLGTVLVCAYLFIQFFPDQAEKLFPPTS.

The transit peptide at 1 to 47 (MAGIISPSPTALYFTSNVGGRRLKAVSWAGKSVSGNVIRRRSLRIAA) directs the protein to the chloroplast. Positions 62-185 (AEEGYSVVDV…VKPGTFESVG (124 aa)) constitute a Rhodanese domain. Cysteine 145 serves as the catalytic Cysteine persulfide intermediate. A helical membrane pass occupies residues 204–222 (ISAVLGTVLVCAYLFIQFF).

It is found in the plastid. The protein resides in the chloroplast. Its subcellular location is the membrane. The polypeptide is Rhodanese-like domain-containing protein 9, chloroplastic (STR9) (Arabidopsis thaliana (Mouse-ear cress)).